Here is a 324-residue protein sequence, read N- to C-terminus: MAASSDSRNVQRIGFLLVRNFALMSYASATEPLRAANLLAGRPLYQIVPLAPGGGTVASSSGLSVGCADLESEGESCHTVFVCAGGEPTDWADTSASHTTLRRLSRLGIRIGGISSGAFVLAAAGLLDNRDFTIHWEHAPALKEAFPHLNPRHARFVLDGGIATCGGGVAPLDMMHAMIAERLGTDFARRVSDWYLHAAVAEPAAPQRGSAAERFGTNHPALLAVLEKMETAIERPLDRTAMARLAGVSPRHLDRLFREHRGTGFLDTYREIRLRHARRLLQQSPLSIPEIAYATGFSSPAHFSNAFKRLFSQTPGSLRRRSGS.

The HTH araC/xylS-type domain occupies 223 to 321 (LAVLEKMETA…SQTPGSLRRR (99 aa)). 2 DNA-binding regions (H-T-H motif) span residues 240–261 (TAMA…REHR) and 288–311 (IPEI…KRLF).

The chain is HTH-type transcriptional regulator GlxA (glxA) from Rhizobium meliloti (strain 1021) (Ensifer meliloti).